A 309-amino-acid chain; its full sequence is Probable sugar phosphate/phosphate translocator At5g05820 (309 aa).

A run of 10 helical transmembrane segments spans residues 9–29 (FFTI…LLLN), 42–62 (IFLT…AIAW), 77–97 (FFKI…GNIS), 100–120 (FLPV…TAVF), 130–150 (AWLT…ASGG), 154–174 (FHLF…LKSV), 192–212 (LLLY…LIME), 229–249 (IVWY…TNFL), 256–278 (ALTL…ILIF), and 282–301 (VSVT…ILYS). Residues 30 to 147 (KYLLSNYGFK…VPVVTGVVIA (118 aa)) enclose the EamA domain.

The protein belongs to the TPT transporter family. TPT (TC 2.A.7.9) subfamily.

The protein resides in the membrane. The polypeptide is Probable sugar phosphate/phosphate translocator At5g05820 (Arabidopsis thaliana (Mouse-ear cress)).